The following is a 101-amino-acid chain: NAD(P)H-quinone oxidoreductase subunit 4L, chloroplastic (101 aa).

3 helical membrane passes run 2-22 (MLEH…YGLI), 32-52 (MCLE…SDLF), and 61-81 (IFSI…PAIV).

The protein belongs to the complex I subunit 4L family. As to quaternary structure, NDH is composed of at least 16 different subunits, 5 of which are encoded in the nucleus.

It is found in the plastid. The protein localises to the chloroplast thylakoid membrane. It carries out the reaction a plastoquinone + NADH + (n+1) H(+)(in) = a plastoquinol + NAD(+) + n H(+)(out). It catalyses the reaction a plastoquinone + NADPH + (n+1) H(+)(in) = a plastoquinol + NADP(+) + n H(+)(out). NDH shuttles electrons from NAD(P)H:plastoquinone, via FMN and iron-sulfur (Fe-S) centers, to quinones in the photosynthetic chain and possibly in a chloroplast respiratory chain. The immediate electron acceptor for the enzyme in this species is believed to be plastoquinone. Couples the redox reaction to proton translocation, and thus conserves the redox energy in a proton gradient. This Ceratophyllum demersum (Rigid hornwort) protein is NAD(P)H-quinone oxidoreductase subunit 4L, chloroplastic.